Here is a 135-residue protein sequence, read N- to C-terminus: Transcriptional activator protein (135 aa).

A Nuclear localization signal motif is present at residues 17 to 32; that stretch reads KVQHRAAKRKRIRRKR. The segment at 37–54 is a zinc-finger region; the sequence is CGCSYYVHINCHNHGFTH. A disordered region spans residues 77-115; that stretch reads LFQDHSTRQQTVRNEPGHNNRPDTVQPQPEESVGTTSML. The segment covering 98-114 has biased composition (polar residues); the sequence is PDTVQPQPEESVGTTSM. The segment at 120-135 is transactivation; that stretch reads GLDDLTASDLAFLEGI.

Belongs to the geminiviridae transcriptional activator protein family. In terms of assembly, monomer. Homodimer. Homooligomer. Self-interaction correlates with nuclear localization and efficient activation of transcription. Monomers suppress local silencing by interacting with and inactivating host adenosine kinase 2 (ADK2) in the cytoplasm. Interacts with and inhibits host SNF1 kinase. Binds to ssDNA. Phosphorylated.

It is found in the host nucleus. Its subcellular location is the host cytoplasm. Its function is as follows. Strong activator of the late viral genes promoters. Enhances the expression of the capsid protein and nuclear shuttle protein. Acts as a suppressor of RNA-mediated gene silencing, also known as post-transcriptional gene silencing (PTGS), a mechanism of plant viral defense that limits the accumulation of viral RNAs. Suppresses the host RNA silencing by inhibiting adenosine kinase 2 (ADK2), a kinase involved in a general methylation pathway. Also suppresses the host basal defense by interacting with and inhibiting SNF1 kinase, a key regulator of cell metabolism implicated in innate antiviral defense. Determines pathogenicity. The sequence is that of Transcriptional activator protein from Indian cassava mosaic virus (ICMV).